Reading from the N-terminus, the 388-residue chain is Quinolone resistance protein NorA (388 aa).

12 helical membrane passes run 5-25 (IFVL…VIPV), 42-62 (LLVA…GTLA), 69-89 (LIIC…AVGH), 99-119 (VIGG…IADI), 129-149 (FGYM…IGGF), 157-177 (MPFY…IVLI), 201-221 (WKVF…LSAF), 239-259 (DISI…IYFF), 269-289 (LTFI…LVFA), 293-313 (WSIM…RPAI), 331-351 (LNST…GALF), and 355-375 (IEAP…IVLI).

The protein belongs to the major facilitator superfamily. TCR/Tet family.

The protein resides in the cell membrane. Involved in quinolone resistance. May constitute a membrane-associated active efflux pump of hydrophilic quinolones. The sequence is that of Quinolone resistance protein NorA (norA) from Staphylococcus aureus (strain Mu50 / ATCC 700699).